The sequence spans 170 residues: CFA/I fimbrial subunit B (170 aa).

The N-terminal stretch at 1–23 is a signal peptide; sequence MKFKKTIGAMALTTMFVAVSASA.

The protein belongs to the fimbrial CS1 protein family. In terms of assembly, CFA/I fimbriae are rather rigid, thread-like filaments of 0.5-1 micrometer, with an apparent axial hole, and a diameter of 7 nanometers. A single CFA/I fimbria consists of about 100 identical protein subunits.

It localises to the fimbrium. Its function is as follows. Fimbriae (also called pili), polar filaments radiating from the surface of the bacterium to a length of 0.5-1.5 micrometers and numbering 100-300 per cell, enable bacteria to colonize the epithelium of specific host organs. This is CFA/I fimbrial subunit B (cfaB) from Escherichia coli.